The chain runs to 368 residues: CCA-adding enzyme (368 aa).

ATP is bound by residues Gly8 and Arg11. Gly8 and Arg11 together coordinate CTP. Mg(2+) is bound by residues Asp21 and Asp23. Residues Arg91, Arg137, and Arg140 each coordinate ATP. Residues Arg91, Arg137, and Arg140 each coordinate CTP.

The protein belongs to the tRNA nucleotidyltransferase/poly(A) polymerase family. Bacterial CCA-adding enzyme type 2 subfamily. Requires Mg(2+) as cofactor.

The enzyme catalyses a tRNA precursor + 2 CTP + ATP = a tRNA with a 3' CCA end + 3 diphosphate. It catalyses the reaction a tRNA with a 3' CCA end + 2 CTP + ATP = a tRNA with a 3' CCACCA end + 3 diphosphate. Functionally, catalyzes the addition and repair of the essential 3'-terminal CCA sequence in tRNAs without using a nucleic acid template. Adds these three nucleotides in the order of C, C, and A to the tRNA nucleotide-73, using CTP and ATP as substrates and producing inorganic pyrophosphate. tRNA 3'-terminal CCA addition is required both for tRNA processing and repair. Also involved in tRNA surveillance by mediating tandem CCA addition to generate a CCACCA at the 3' terminus of unstable tRNAs. While stable tRNAs receive only 3'-terminal CCA, unstable tRNAs are marked with CCACCA and rapidly degraded. This chain is CCA-adding enzyme, found in Pseudomonas putida (strain ATCC 700007 / DSM 6899 / JCM 31910 / BCRC 17059 / LMG 24140 / F1).